Reading from the N-terminus, the 278-residue chain is Dermonecrotic toxin LlSicTox-alphaIII3ii (278 aa).

H5 is a catalytic residue. 2 residues coordinate Mg(2+): E25 and D27. H40 acts as the Nucleophile in catalysis. C44 and C50 are joined by a disulfide. D84 serves as a coordination point for Mg(2+).

It belongs to the arthropod phospholipase D family. Class I subfamily. The cofactor is Mg(2+). Expressed by the venom gland.

Its subcellular location is the secreted. The enzyme catalyses an N-(acyl)-sphingosylphosphocholine = an N-(acyl)-sphingosyl-1,3-cyclic phosphate + choline. It carries out the reaction an N-(acyl)-sphingosylphosphoethanolamine = an N-(acyl)-sphingosyl-1,3-cyclic phosphate + ethanolamine. The catalysed reaction is a 1-acyl-sn-glycero-3-phosphocholine = a 1-acyl-sn-glycero-2,3-cyclic phosphate + choline. It catalyses the reaction a 1-acyl-sn-glycero-3-phosphoethanolamine = a 1-acyl-sn-glycero-2,3-cyclic phosphate + ethanolamine. Dermonecrotic toxins cleave the phosphodiester linkage between the phosphate and headgroup of certain phospholipids (sphingolipid and lysolipid substrates), forming an alcohol (often choline) and a cyclic phosphate. This toxin acts on sphingomyelin (SM). It may also act on ceramide phosphoethanolamine (CPE), lysophosphatidylcholine (LPC) and lysophosphatidylethanolamine (LPE), but not on lysophosphatidylserine (LPS), and lysophosphatidylglycerol (LPG). It acts by transphosphatidylation, releasing exclusively cyclic phosphate products as second products. Induces dermonecrosis, hemolysis, increased vascular permeability, edema, inflammatory response, and platelet aggregation. This Loxosceles laeta (South American recluse spider) protein is Dermonecrotic toxin LlSicTox-alphaIII3ii.